The sequence spans 404 residues: MRSQPHVLGIVLAGGEGKRLFPLTADRAKPAVPFGGAYRLIDFVLSNLVNAGYLRLCVLTQYKSHSLDRHISQTWRLSGFAGEYITPVPAQQRLGPRWYTGSADAIMQSLNLIYDEDPDYIVVFGADHVYRMDPEQMVSHHIDSGAGVTVAGIRVPRSEASAFGCIDSDESGRITQFLEKPAHPPGTPDDPNMTFASMGNYVFTTKVLVDSIRADAENSDSDHDMGGDIIPALVEAGEAGVYDFADNQVPGATDRDHGYWRDVGTIDAFYDAHMDLVSVHPVFNLYNKHWPIRGAAENLPPAKFAQGGLAQECIVGSGSILSAATVRNSVLSSNVVVDDGATVEGSVLMPGVRIGRGAVVRRAILDKNVVVGEGEIIGVDLDRDRERFAVSNGGVVTVGKGVWV.

Residues Tyr-99, Gly-164, 179–180, and Ser-197 each bind alpha-D-glucose 1-phosphate; that span reads EK.

It belongs to the bacterial/plant glucose-1-phosphate adenylyltransferase family. In terms of assembly, homotetramer.

The enzyme catalyses alpha-D-glucose 1-phosphate + ATP + H(+) = ADP-alpha-D-glucose + diphosphate. Its pathway is glycan biosynthesis; glycogen biosynthesis. Functionally, involved in the biosynthesis of ADP-glucose, a building block required for the elongation reactions to produce glycogen. Catalyzes the reaction between ATP and alpha-D-glucose 1-phosphate (G1P) to produce pyrophosphate and ADP-Glc. In Nocardia farcinica (strain IFM 10152), this protein is Glucose-1-phosphate adenylyltransferase.